A 434-amino-acid polypeptide reads, in one-letter code: MSRSRHLGKIRKRLEDVKSQWVRPARADFSDNESARLATDALLDGGSEAYWRVLSQEGEVDFLSSVEAQYIQAQAREPPCPPDTLGGAEAGPKGLDSSSLQSGTYFPVASEGSEPALLHSWASAEKPYLKEKSSATVYFQTVKHNNIRDLVRRCITRTSQVLVILMDVFTDVEIFCDILEAANKRGVFVCVLLDQGGVKLFQEMCDKVQISDSHLKNISIRSVEGEIYCAKSGRKFAGQIREKFIISDWRFVLSGSYSFTWLCGHVHRNILSKFTGQAVELFDEEFRHLYASSKPVMGLKSPRLVAPVPPGAAPANGRLSSSSGSASDRTSSNPFSGRSAGSHPGTRSVSASSGPCSPAAPHPPPPPRFQPHQGPWGAPSPQAHLSPRPHDGPPAAVYSNLGAYRPTRLQLEQLGLVPRLTPTWRPFLQASPHF.

The interval 1-298 (MSRSRHLGKI…LYASSKPVMG (298 aa)) is DUF1669. The interval 76–97 (REPPCPPDTLGGAEAGPKGLDS) is disordered. Phosphoserine is present on residues Ser301, Ser327, Ser348, and Ser357. The interval 308–399 (VPPGAAPANG…HDGPPAAVYS (92 aa)) is disordered. Composition is skewed to low complexity over residues 320–332 (SSSS…RTSS) and 348–357 (SVSASSGPCS). Residues 358 to 369 (PAAPHPPPPPRF) show a composition bias toward pro residues.

This sequence belongs to the FAM83 family. Directly interacts (via DUF1669) with casein kinase isoforms CSNK1A1, CSNK1A1L, CSNK1D and CSNK1E. Phosphorylated upon EGFR activation in a breast cancer cell line.

It is found in the cytoplasm. Its function is as follows. Involved in mitochondrial maintenance during adipogenesis. May be acting by playing a role in the maintenance of normal mitochondrial function. The protein is Protein FAM83A of Homo sapiens (Human).